Consider the following 228-residue polypeptide: 3-dehydroquinate dehydratase (228 aa).

Residues 30–32 (EWR) and Arg-62 contribute to the 3-dehydroquinate site. The active-site Proton donor/acceptor is His-118. Catalysis depends on Lys-143, which acts as the Schiff-base intermediate with substrate. Arg-186, Ser-205, and Gln-209 together coordinate 3-dehydroquinate.

It belongs to the type-I 3-dehydroquinase family. As to quaternary structure, homodimer.

It catalyses the reaction 3-dehydroquinate = 3-dehydroshikimate + H2O. It participates in metabolic intermediate biosynthesis; chorismate biosynthesis; chorismate from D-erythrose 4-phosphate and phosphoenolpyruvate: step 3/7. Its function is as follows. Involved in the third step of the chorismate pathway, which leads to the biosynthesis of aromatic amino acids. Catalyzes the cis-dehydration of 3-dehydroquinate (DHQ) and introduces the first double bond of the aromatic ring to yield 3-dehydroshikimate. The polypeptide is 3-dehydroquinate dehydratase (Streptococcus pyogenes serotype M12 (strain MGAS9429)).